The primary structure comprises 331 residues: MIERDNGTKRHIPVLLEPVLAGLAPLSGATVIDGTFGAGGYTRALLNAGANVTALDRDPHAIREGKPLVDQFFPRLRLVQTEFSQLDRVIEEKVDAVILDIGVSSMQLDEAERGFSFQKDGPLDMRMAQTGLSASDVVNHLKIDDLIQIFRILGEERHSSRIAKMIEKRRRIRPFLRTRDLAHEIEVLIGRKPGDRIHPATRVFQALRIYVNDELNELTRGLFAAERVLKAGGRLGVVSFHSLEDRIVKKFFSFCSGNRKGSRYLPEVESAPATFFPLFKGGKTASEEELQKNPRARSARLRIGIRTQVDAMEADMKLFGLKEIANFESNK.

Residues 39 to 41, D56, F83, D100, and Q107 each bind S-adenosyl-L-methionine; that span reads GGY.

This sequence belongs to the methyltransferase superfamily. RsmH family.

It is found in the cytoplasm. The enzyme catalyses cytidine(1402) in 16S rRNA + S-adenosyl-L-methionine = N(4)-methylcytidine(1402) in 16S rRNA + S-adenosyl-L-homocysteine + H(+). Its function is as follows. Specifically methylates the N4 position of cytidine in position 1402 (C1402) of 16S rRNA. In Bartonella bacilliformis (strain ATCC 35685 / KC583 / Herrer 020/F12,63), this protein is Ribosomal RNA small subunit methyltransferase H.